A 130-amino-acid chain; its full sequence is Small ribosomal subunit protein uS11 (130 aa).

It belongs to the universal ribosomal protein uS11 family. Part of the 30S ribosomal subunit.

Functionally, located on the platform of the 30S subunit. The chain is Small ribosomal subunit protein uS11 from Thermoplasma acidophilum (strain ATCC 25905 / DSM 1728 / JCM 9062 / NBRC 15155 / AMRC-C165).